We begin with the raw amino-acid sequence, 401 residues long: Inactive (1R,4R,5S)-(-)-guaia-6,10(14)-diene synthase (401 aa).

The segment at 1 to 20 is disordered; the sequence is MVKFDSGSESEMTNGDELHI. Mg(2+) contacts are provided by D134 and E139. A DDXXD motif motif is present at residues 134–138; sequence DDQFD. R242 is a binding site for substrate. Residue S292 coordinates Mg(2+). K295 lines the substrate pocket. D296 lines the Mg(2+) pocket. 375–376 is a substrate binding site; that stretch reads RY.

The protein belongs to the terpene synthase family. Mg(2+) is required as a cofactor.

This is Inactive (1R,4R,5S)-(-)-guaia-6,10(14)-diene synthase from Gibberella fujikuroi (strain CBS 195.34 / IMI 58289 / NRRL A-6831) (Bakanae and foot rot disease fungus).